A 446-amino-acid polypeptide reads, in one-letter code: MYQQKYLISSVSDSNQNGFSLHKNSFSYHFYSQMVSEGFGVILEISFSSRLVSSLEEKRIPKSQNLRSIHSIFPFLEDKLSHLNYVSDLLIPYPIHMEILVQILQCWIKDVPSLHLLRFIFHEYHNLNSLITSKKSIYVFSKRKKRFLWFLHNFYVYECEYIFLFLRKQSSYLRSISSGVFLERTHFYGKIEYLRVMSCNSFQRILWFLKDIFIHYVRYQGKAILVSKGTLILMNKWKFHFVNFWQFYFHFWFQPYRIRIKQLPNYSFSFMGYFSSVLKNPLVVRNQMLENSFLINTLTNKLDTIAPVIFLIRSLSKAQFCTVLGHPISKSIWTNLSDSDILDRFCRICRNLCRYHSGSSKKQVLYRIKYILRLSCARTLARKHKSTVRTFMRRLGSAFLEEFFFEEEQSLSLVFLQKIPFLLHGLNRERIWYLDIIRMNDLVDHS.

The protein belongs to the intron maturase 2 family. MatK subfamily.

It localises to the plastid. Its subcellular location is the chloroplast. Usually encoded in the trnK tRNA gene intron. Probably assists in splicing its own and other chloroplast group II introns. This is Maturase K from Phalaenopsis aphrodite subsp. formosana (Moth orchid).